Consider the following 393-residue polypeptide: Acetylornithine aminotransferase (393 aa).

Pyridoxal 5'-phosphate-binding positions include 105–106 (GA) and Phe-138. N(2)-acetyl-L-ornithine is bound at residue Arg-141. 224–227 (DEVQ) is a pyridoxal 5'-phosphate binding site. Lys-253 carries the post-translational modification N6-(pyridoxal phosphate)lysine. Ser-281 is a binding site for N(2)-acetyl-L-ornithine. Residue Thr-282 coordinates pyridoxal 5'-phosphate.

This sequence belongs to the class-III pyridoxal-phosphate-dependent aminotransferase family. ArgD subfamily. As to quaternary structure, homodimer. Pyridoxal 5'-phosphate serves as cofactor.

Its subcellular location is the cytoplasm. It carries out the reaction N(2)-acetyl-L-ornithine + 2-oxoglutarate = N-acetyl-L-glutamate 5-semialdehyde + L-glutamate. It participates in amino-acid biosynthesis; L-arginine biosynthesis; N(2)-acetyl-L-ornithine from L-glutamate: step 4/4. The sequence is that of Acetylornithine aminotransferase from Haemophilus ducreyi (strain 35000HP / ATCC 700724).